Consider the following 525-residue polypeptide: Bifunctional purine biosynthesis protein PurH (525 aa).

An MGS-like domain is found at 1-148 (MPSNNLIKNA…KNYKNVIVIV (148 aa)).

Belongs to the PurH family.

The enzyme catalyses (6R)-10-formyltetrahydrofolate + 5-amino-1-(5-phospho-beta-D-ribosyl)imidazole-4-carboxamide = 5-formamido-1-(5-phospho-D-ribosyl)imidazole-4-carboxamide + (6S)-5,6,7,8-tetrahydrofolate. It catalyses the reaction IMP + H2O = 5-formamido-1-(5-phospho-D-ribosyl)imidazole-4-carboxamide. It functions in the pathway purine metabolism; IMP biosynthesis via de novo pathway; 5-formamido-1-(5-phospho-D-ribosyl)imidazole-4-carboxamide from 5-amino-1-(5-phospho-D-ribosyl)imidazole-4-carboxamide (10-formyl THF route): step 1/1. It participates in purine metabolism; IMP biosynthesis via de novo pathway; IMP from 5-formamido-1-(5-phospho-D-ribosyl)imidazole-4-carboxamide: step 1/1. The sequence is that of Bifunctional purine biosynthesis protein PurH from Buchnera aphidicola subsp. Acyrthosiphon pisum (strain APS) (Acyrthosiphon pisum symbiotic bacterium).